The primary structure comprises 177 residues: DELTA-stichotoxin-Hcr4b (177 aa).

The interval 3–12 is plays an important role in the hemolytic activity; the sequence is ALAGTITLGA. The tract at residues 11-30 is N-terminal region; that stretch reads GASLGFQILDKVLGELGKVS. Phosphocholine-binding residues include S54, V87, S105, P107, Y133, Y137, and Y138. The trp-rich region, which is important for the binding to lipid membrane stretch occupies residues 105 to 120; the sequence is SVPFDYNLYSNWWDVK.

The protein belongs to the actinoporin family. Sea anemone subfamily. In terms of assembly, octamer or nonamer in membranes. Monomer in the soluble state.

It is found in the secreted. The protein resides in the nematocyst. The protein localises to the target cell membrane. Its function is as follows. Pore-forming protein that forms cations-selective hydrophilic pores of around 1 nm and causes cardiac stimulation and cytolysis. Pore formation is a multi-step process that involves specific recognition of membrane sphingomyelin (but neither cholesterol nor phosphatidylcholine) using aromatic rich region and adjacent phosphocholine (POC) binding site, firm binding to the membrane (mainly driven by hydrophobic interactions) accompanied by the transfer of the N-terminal region to the lipid-water interface and finally pore formation after oligomerization of monomers. Cytolytic effects include red blood cells hemolysis, platelet aggregation and lysis, cytotoxic and cytostatic effects on fibroblasts. Lethality in mammals has been ascribed to severe vasospasm of coronary vessels, cardiac arrhythmia, and inotropic effects. Preincubation with exogenous sphingomyeline causes complete loss of hemolytic activity. The protein is DELTA-stichotoxin-Hcr4b of Radianthus crispa (Leathery sea anemone).